The following is a 219-amino-acid chain: PKHD-type hydroxylase Mmar10_1675 (219 aa).

Residues 77–171 (TLSRILVSRY…RVAVVGWVRS (95 aa)) form the Fe2OG dioxygenase domain. Fe cation-binding residues include His95, Asp97, and His152. 2-oxoglutarate is bound at residue Arg162.

Fe(2+) serves as cofactor. Requires L-ascorbate as cofactor.

The sequence is that of PKHD-type hydroxylase Mmar10_1675 from Maricaulis maris (strain MCS10) (Caulobacter maris).